Reading from the N-terminus, the 444-residue chain is Protein giant-lens (444 aa).

An N-terminal signal peptide occupies residues 1–24 (MPTTLMLLPCMLLLLLTAAAVAVG). Two-fingered domain 1 part repeat units lie at residues 123–165 (RDVR…CRCP) and 285–307 (CPSS…YKMC). Disulfide bonds link Cys141–Cys162, Cys147–Cys285, Cys164–Cys307, Cys316–Cys341, Cys343–Cys370, Cys378–Cys405, Cys384–Cys413, and Cys407–Cys440. Two-fingered domain repeat units lie at residues 316–370 (CTHF…LFAC) and 378–444 (CQRK…MAND). Residue Asn333 is glycosylated (N-linked (GlcNAc...) asparagine).

Interacts with spi. In terms of tissue distribution, during embryogenesis, expression is in a segmental pattern in the ectoderm and in the nervous system. In the eye imaginal disks, expression in photoreceptor cells begins a few rows posterior to the morphogenetic furrow. Also expressed in the wing disk. In the adult, expression is seen in the retina and lamina.

The protein localises to the secreted. In terms of biological role, regulates cell determination; development of ommatidia and optic lobe. Is a signaling molecule involved in the process of axon pathfinding in the eye. Part of the Ras pathway regulating programmed cell death in pupal eyes; activated by lozenge (lz). Antagonist for the Egfr receptor (gurken). Inhibits Egfr signaling without interacting directly with the receptor, but instead by sequestering the Egfr-activating ligand spitz (spi). In Drosophila melanogaster (Fruit fly), this protein is Protein giant-lens (aos).